The sequence spans 325 residues: Isoaspartyl peptidase/L-asparaginase (325 aa).

Residue threonine 193 is the Nucleophile of the active site. Residues 221 to 224 (RIGD) and 243 to 246 (TGKG) contribute to the substrate site.

Belongs to the Ntn-hydrolase family. As to quaternary structure, heterotetramer of two alpha and two beta chains arranged as a dimer of alpha/beta heterodimers. Cleaved into an alpha and beta chain by autocatalysis; this activates the enzyme. The N-terminal residue of the beta subunit is responsible for the nucleophile hydrolase activity. In terms of tissue distribution, expressed in ripening seeds and developing nodules.

The catalysed reaction is Cleavage of a beta-linked Asp residue from the N-terminus of a polypeptide.. Functionally, degrades proteins damaged by L-isoaspartyl residue formation (also known as beta-Asp residues). Also has L-asparaginase activity, which is used to liberate stored nitrogen during seed development. The protein is Isoaspartyl peptidase/L-asparaginase of Lupinus luteus (European yellow lupine).